Consider the following 79-residue polypeptide: MASDRQNLQDAFLNHVRKTKVPVTIFLINGVKLQGVITWFDNFCVLLRRDGQSQLVYKHAISTIMPAQPISLYEGEDSN.

The 61-residue stretch at 10–70 (DAFLNHVRKT…ISTIMPAQPI (61 aa)) folds into the Sm domain.

This sequence belongs to the Hfq family. Homohexamer.

In terms of biological role, RNA chaperone that binds small regulatory RNA (sRNAs) and mRNAs to facilitate mRNA translational regulation in response to envelope stress, environmental stress and changes in metabolite concentrations. Also binds with high specificity to tRNAs. This chain is RNA-binding protein Hfq, found in Ruegeria sp. (strain TM1040) (Silicibacter sp.).